A 192-amino-acid chain; its full sequence is Pyruvate synthase subunit PorC (192 aa).

In terms of assembly, heterotetramer of one alpha, one beta, one delta and one gamma chain.

It carries out the reaction 2 oxidized [2Fe-2S]-[ferredoxin] + pyruvate + CoA = 2 reduced [2Fe-2S]-[ferredoxin] + acetyl-CoA + CO2 + H(+). The chain is Pyruvate synthase subunit PorC (porC) from Thermotoga maritima (strain ATCC 43589 / DSM 3109 / JCM 10099 / NBRC 100826 / MSB8).